A 278-amino-acid chain; its full sequence is MAVVIDGKQVAASYRETLKERVAELRARGIVPKLKVVLIGDDPASHSYVRGKERAAEEIGIDSQVLRFDETISEKELLDLIDLMNADEEVHGILVQLPLPKHIDESRVIMRISPEKDVDGFHPENVGKMMLGLDTLLPCTPHGILHLAKTQTEIAGKHVVVVGRSQIVGKPVGMLFLNESATVTYCHSKTADLGEMTRQADILIVAVGRAGLVTSDMVKPGALVIDVGVNRVEGRLVGDVDYEAVKEKASAITPVPGGVGPMTITMLMHNTVEVASRG.

Residues 163–165 (GRS), Ser188, and Val229 each bind NADP(+).

This sequence belongs to the tetrahydrofolate dehydrogenase/cyclohydrolase family. In terms of assembly, homodimer.

The catalysed reaction is (6R)-5,10-methylene-5,6,7,8-tetrahydrofolate + NADP(+) = (6R)-5,10-methenyltetrahydrofolate + NADPH. The enzyme catalyses (6R)-5,10-methenyltetrahydrofolate + H2O = (6R)-10-formyltetrahydrofolate + H(+). Its pathway is one-carbon metabolism; tetrahydrofolate interconversion. In terms of biological role, catalyzes the oxidation of 5,10-methylenetetrahydrofolate to 5,10-methenyltetrahydrofolate and then the hydrolysis of 5,10-methenyltetrahydrofolate to 10-formyltetrahydrofolate. The polypeptide is Bifunctional protein FolD (Exiguobacterium sp. (strain ATCC BAA-1283 / AT1b)).